The sequence spans 272 residues: Large ribosomal subunit protein uL3 (272 aa).

Residues 125 to 146 (QHIGPKSHGGGGGSQPLRQTGS) are disordered.

It belongs to the universal ribosomal protein uL3 family. Part of the 50S ribosomal subunit. Forms a cluster with proteins L14 and L19.

In terms of biological role, one of the primary rRNA binding proteins, it binds directly near the 3'-end of the 23S rRNA, where it nucleates assembly of the 50S subunit. The sequence is that of Large ribosomal subunit protein uL3 from Metamycoplasma arthritidis (strain 158L3-1) (Mycoplasma arthritidis).